A 277-amino-acid chain; its full sequence is Probable endonuclease 4 (277 aa).

Zn(2+) contacts are provided by His-67, His-107, Glu-141, Asp-173, His-176, His-207, Asp-220, His-222, and Glu-252.

The protein belongs to the AP endonuclease 2 family. Zn(2+) is required as a cofactor.

It catalyses the reaction Endonucleolytic cleavage to 5'-phosphooligonucleotide end-products.. In terms of biological role, endonuclease IV plays a role in DNA repair. It cleaves phosphodiester bonds at apurinic or apyrimidinic (AP) sites, generating a 3'-hydroxyl group and a 5'-terminal sugar phosphate. This chain is Probable endonuclease 4, found in Finegoldia magna (strain ATCC 29328 / DSM 20472 / WAL 2508) (Peptostreptococcus magnus).